We begin with the raw amino-acid sequence, 87 residues long: Omega-lycotoxin-Am1d (87 aa).

Residues 1 to 17 (MKLSIFFVLFFIAIAYC) form the signal peptide. The propeptide occupies 18–40 (QPEFLDDEEDEVEETLPVAEEGR). 4 cysteine pairs are disulfide-bonded: Cys44/Cys59, Cys51/Cys64, Cys58/Cys84, and Cys66/Cys82.

This sequence belongs to the neurotoxin omega-lctx family. In terms of tissue distribution, expressed by the venom gland.

The protein resides in the secreted. Functionally, modulates Cav2.1/CACNA1A voltage-gated calcium channels (P/Q-type currents) in rat cerebellar Purkinje cells and hippocampal CA1-CA3 neurons. At saturating concentrations (&gt;10 nM) decelerates activation kinetics and slightly increases peak amplitude without affecting deactivation kinetics. In vivo, does not cause death when intravenously injected into mice. In rat models, through its activity on Cav2.1/CACNA1A, has an ameliorative effect on memory defects provoked by hyperstimulation of N-methyl-D-aspartate receptors (NMDARs) in the hippocampus. This is Omega-lycotoxin-Am1d from Alopecosa marikovskyi (Wolf spider).